We begin with the raw amino-acid sequence, 208 residues long: MTYVLPSLPYSYNSLEPFFDEKTMIIHHTRHHQAYINNTNSILNGTHYENLLIEELISKLNILSIENKLALQNNAGGHINHSLFWKWLKLNTILKDDFKIILEKNFKSVDFFKKQFEKIALSHFGSGWIWLIKKYDNTLRIVTTVNQNTPLMGKEISGISGIPILGLDLWEHAYYLKYKNNRSDYVNAFWNVVNWDEVSYRFFNISNM.

Mn(2+) is bound by residues histidine 27, histidine 81, aspartate 168, and histidine 172.

Belongs to the iron/manganese superoxide dismutase family. Homodimer. Mn(2+) serves as cofactor.

It carries out the reaction 2 superoxide + 2 H(+) = H2O2 + O2. Destroys superoxide anion radicals which are normally produced within the cells and which are toxic to biological systems. The polypeptide is Superoxide dismutase [Mn] (sodA) (Buchnera aphidicola subsp. Baizongia pistaciae (strain Bp)).